The following is a 439-amino-acid chain: Ribosomal protein uS12 methylthiotransferase RimO (439 aa).

In terms of domain architecture, MTTase N-terminal spans 5–115; sequence PKIGFVSLGC…LIEAVHTHAP (111 aa). Residues C14, C50, C79, C146, C150, and C153 each coordinate [4Fe-4S] cluster. The 238-residue stretch at 132–369 folds into the Radical SAM core domain; the sequence is LTPRHYSYLK…MGLQAQISAD (238 aa). Positions 372–439 constitute a TRAM domain; that stretch reads QRFVGTEQQV…ESTEYDLIAD (68 aa).

This sequence belongs to the methylthiotransferase family. RimO subfamily. The cofactor is [4Fe-4S] cluster.

It localises to the cytoplasm. It catalyses the reaction L-aspartate(89)-[ribosomal protein uS12]-hydrogen + (sulfur carrier)-SH + AH2 + 2 S-adenosyl-L-methionine = 3-methylsulfanyl-L-aspartate(89)-[ribosomal protein uS12]-hydrogen + (sulfur carrier)-H + 5'-deoxyadenosine + L-methionine + A + S-adenosyl-L-homocysteine + 2 H(+). Functionally, catalyzes the methylthiolation of an aspartic acid residue of ribosomal protein uS12. The chain is Ribosomal protein uS12 methylthiotransferase RimO from Francisella philomiragia subsp. philomiragia (strain ATCC 25017 / CCUG 19701 / FSC 153 / O#319-036).